We begin with the raw amino-acid sequence, 439 residues long: Xylose isomerase (439 aa).

Active-site residues include histidine 101 and aspartate 104. Glutamate 232, glutamate 268, histidine 271, aspartate 296, aspartate 307, aspartate 309, and aspartate 339 together coordinate Mg(2+).

The protein belongs to the xylose isomerase family. As to quaternary structure, homotetramer. It depends on Mg(2+) as a cofactor.

The protein localises to the cytoplasm. It catalyses the reaction alpha-D-xylose = alpha-D-xylulofuranose. The polypeptide is Xylose isomerase (Yersinia pseudotuberculosis serotype O:1b (strain IP 31758)).